The following is a 230-amino-acid chain: Orotidine 5'-phosphate decarboxylase (230 aa).

Residues D11, K34, 61–70, T117, R179, Q188, G208, and R209 each bind substrate; that span reads DLKLHDIPNT. K63 serves as the catalytic Proton donor.

Belongs to the OMP decarboxylase family. Type 1 subfamily. Homodimer.

It carries out the reaction orotidine 5'-phosphate + H(+) = UMP + CO2. It functions in the pathway pyrimidine metabolism; UMP biosynthesis via de novo pathway; UMP from orotate: step 2/2. Catalyzes the decarboxylation of orotidine 5'-monophosphate (OMP) to uridine 5'-monophosphate (UMP). This is Orotidine 5'-phosphate decarboxylase from Streptococcus pyogenes serotype M18 (strain MGAS8232).